Here is a 256-residue protein sequence, read N- to C-terminus: MASRYDRAITVFSPDGHLFQVEYAQEAVKKGSTAVGIRGTNIVVLGVEKKSVAKLQDERTVRKICALDDHVCMAFAVLTIFIGLTADARVVINRARVECQSHKLTVEDPVTVEYITRFIATLKQKYTQSNGRRPFGISALIVGFDDDGISRLYQTDPSGTYHAWKANAIGRSAKTVREFLEKNYTEDAIASDSEAIKLAIKALLEVVQSGGKNIELAIIRRNQPLKMFSAKEVELYVTEIEKEKEEAEKKKSKKSV.

This sequence belongs to the peptidase T1A family. Component of the outer alpha-ring of the 20S proteasome core which is composed of 28 subunits that are arranged in four stacked rings, resulting in a barrel-shaped structure. The catalytic chamber with the active sites is on the inside of the barrel. Interacts with canonical subunits of the spermatoproteasome, including proteasome activators PSME4 (also called PA200) and PSME3 (also called PA28-gamma). Interacts with proteasome-interacting proteins chaperones, ubiquitin ligases and ubiquitin specific proteases. Interacts with meiotic proteins cyclin dependent kinase CDK1 and the ATPase TRIP13 as well as proteins of the synaptonemal complex SIX6OS1 and SYCE3.

It localises to the nucleus. Component of the spermatoproteasome, a proteasome specifically found in testis that promotes acetylation-dependent degradation of histones, thereby participating actively to the exchange of histones during spermatogenesis. The proteasome is a protein complex that degrades unneeded or damaged proteins by proteolysis, a chemical reaction that breaks peptide bonds. Required for 20S core proteasome assembly, essential for the degradation of meiotic proteins RAD51 and RPA1 at late prophase I and the progression of meiosis I during spermatogenesis. Localizes to the synaptonemal complex, a 'zipper'-like structure that holds homologous chromosome pairs in synapsis during meiotic prophase I. This Homo sapiens (Human) protein is Proteasome subunit alpha-type 8 (PSMA8).